The following is a 288-amino-acid chain: Mycothiol S-conjugate amidase (288 aa).

3 residues coordinate Zn(2+): histidine 12, aspartate 15, and histidine 142.

It belongs to the MshB deacetylase family. Mca subfamily. In terms of assembly, monomer. Zn(2+) serves as cofactor.

It catalyses the reaction mycothiol S-conjugate + H2O = an N-acetyl-L-cysteine-S-conjugate + 1D-myo-inositol 2-amino-2-deoxy-alpha-D-glucopyranoside. With respect to regulation, partially inhibited by MSH when MSmB (a bimane derivative of MSH) is used as substrate. In terms of biological role, a mycothiol (MSH, N-acetyl-cysteinyl-glucosaminyl-inositol) S-conjugate amidase, it recycles conjugated MSH to the N-acetyl cysteine conjugate and the MSH precursor. Involved in MSH-dependent detoxification of a number of alkylating agents and antibiotics. Activity is specific for the mycothiol moiety. The polypeptide is Mycothiol S-conjugate amidase (Mycolicibacterium smegmatis (strain ATCC 700084 / mc(2)155) (Mycobacterium smegmatis)).